The chain runs to 226 residues: UPF0758 protein GTNG_2548 (226 aa).

The MPN domain occupies 104–226 (VIRCPEDGAK…FISLKEKGYV (123 aa)). The Zn(2+) site is built by histidine 175, histidine 177, and aspartate 188. Positions 175–188 (HNHPSGDPTPSRED) match the JAMM motif motif.

This sequence belongs to the UPF0758 family.

This is UPF0758 protein GTNG_2548 from Geobacillus thermodenitrificans (strain NG80-2).